A 204-amino-acid polypeptide reads, in one-letter code: Small ribosomal subunit protein uS4 (204 aa).

Residues Ser-22–Pro-43 are disordered. In terms of domain architecture, S4 RNA-binding spans Thr-94 to Leu-154.

It belongs to the universal ribosomal protein uS4 family. In terms of assembly, part of the 30S ribosomal subunit. Contacts protein S5. The interaction surface between S4 and S5 is involved in control of translational fidelity.

In terms of biological role, one of the primary rRNA binding proteins, it binds directly to 16S rRNA where it nucleates assembly of the body of the 30S subunit. Its function is as follows. With S5 and S12 plays an important role in translational accuracy. The protein is Small ribosomal subunit protein uS4 of Oenococcus oeni (strain ATCC BAA-331 / PSU-1).